The chain runs to 127 residues: Calcitonin receptor-stimulating peptide 1 (127 aa).

The signal sequence occupies residues 1–25 (MGFWKFSPFLVLGILALYQVGFLQA). A propeptide spanning residues 26–79 (APFRSALENPPDSGVRNEEELRLLLAAVMKDYMQMKTHELEQEQETEGSRVAVQ) is cleaved from the precursor. Cys-83 and Cys-88 are oxidised to a cystine.

This sequence belongs to the calcitonin family.

The protein localises to the secreted. Its function is as follows. Stimulates cAMP production in porcine kidney cell line LLC-PK1 via the calcitonin receptor (CT) but not via the CT-like (CL) receptor. The polypeptide is Calcitonin receptor-stimulating peptide 1 (CRSP1) (Canis lupus familiaris (Dog)).